We begin with the raw amino-acid sequence, 240 residues long: MGRGKIVIRRIDNSTSRQVTFSKRRNGIFKKAKELAILCDAEVGLMIFSSTGRLYEYSSTSMKSVIDRYGKSKDEQQAVANPNSELKFWQREAASLRQQLHNLQENHRQLMGEDLSGLNVKELQSLENQLEISLRSVRTKKDHVLIDEIHELNRKGSLVHQENMELYKKISLIRQENAELYKKIYETEGPSEVNRDSPTPYNFAVIEKTNVPVQLGLSTLPQHSDAEQSTAPKLGLQLNP.

The MADS-box domain maps to 1–61 (MGRGKIVIRR…GRLYEYSSTS (61 aa)). Positions 86 to 176 (LKFWQREAAS…YKKISLIRQE (91 aa)) constitute a K-box domain. Over residues 220 to 231 (LPQHSDAEQSTA) the composition is skewed to polar residues. A disordered region spans residues 220–240 (LPQHSDAEQSTAPKLGLQLNP).

Ubiquitous.

Its subcellular location is the nucleus. Probable transcription factor. The polypeptide is MADS-box transcription factor 27 (MADS27) (Oryza sativa subsp. japonica (Rice)).